A 305-amino-acid polypeptide reads, in one-letter code: UDP-N-acetylenolpyruvoylglucosamine reductase (305 aa).

Residues 33-198 (RVGGPAQVLF…TGGTFRGRRA (166 aa)) enclose the FAD-binding PCMH-type domain. The active site involves R178. Residue S227 is the Proton donor of the active site. E297 is an active-site residue.

It belongs to the MurB family. FAD serves as cofactor.

It is found in the cytoplasm. The catalysed reaction is UDP-N-acetyl-alpha-D-muramate + NADP(+) = UDP-N-acetyl-3-O-(1-carboxyvinyl)-alpha-D-glucosamine + NADPH + H(+). It functions in the pathway cell wall biogenesis; peptidoglycan biosynthesis. Its function is as follows. Cell wall formation. This chain is UDP-N-acetylenolpyruvoylglucosamine reductase, found in Nitrobacter hamburgensis (strain DSM 10229 / NCIMB 13809 / X14).